The chain runs to 147 residues: D-aminoacyl-tRNA deacylase (147 aa).

Residues G137–P138 carry the Gly-cisPro motif, important for rejection of L-amino acids motif.

This sequence belongs to the DTD family. As to quaternary structure, homodimer.

Its subcellular location is the cytoplasm. It carries out the reaction glycyl-tRNA(Ala) + H2O = tRNA(Ala) + glycine + H(+). The enzyme catalyses a D-aminoacyl-tRNA + H2O = a tRNA + a D-alpha-amino acid + H(+). An aminoacyl-tRNA editing enzyme that deacylates mischarged D-aminoacyl-tRNAs. Also deacylates mischarged glycyl-tRNA(Ala), protecting cells against glycine mischarging by AlaRS. Acts via tRNA-based rather than protein-based catalysis; rejects L-amino acids rather than detecting D-amino acids in the active site. By recycling D-aminoacyl-tRNA to D-amino acids and free tRNA molecules, this enzyme counteracts the toxicity associated with the formation of D-aminoacyl-tRNA entities in vivo and helps enforce protein L-homochirality. This is D-aminoacyl-tRNA deacylase from Exiguobacterium sp. (strain ATCC BAA-1283 / AT1b).